The sequence spans 250 residues: Small ribosomal subunit protein uS5 (250 aa).

The segment covering 1-22 has biased composition (polar residues); it reads MNVVETSSEMNSNVEKASTPKQ. Positions 1–40 are disordered; that stretch reads MNVVETSSEMNSNVEKASTPKQENNKRFERKSRPSSRQKV. The S5 DRBM domain maps to 45 to 108; it reads FEEKVVTIRR…KEAKKNLVSV (64 aa).

The protein belongs to the universal ribosomal protein uS5 family. As to quaternary structure, part of the 30S ribosomal subunit. Contacts proteins S4 and S8.

In terms of biological role, with S4 and S12 plays an important role in translational accuracy. Located at the back of the 30S subunit body where it stabilizes the conformation of the head with respect to the body. The sequence is that of Small ribosomal subunit protein uS5 from Mycoplasma capricolum subsp. capricolum (strain California kid / ATCC 27343 / NCTC 10154).